A 713-amino-acid chain; its full sequence is MLKKEYLKNPYLVLFAMIVLAYVFSVFCRFYWVWWASEFNEYFFNNQLMIISNDGYAFAEGARDMIAGFHQPNDLSYYGSSLSTLTYWLYKITPFSFESIILYMSTFLSSLVVIPIILLANEYKRPLMGFVAALLASVANSYYNRTMSGYYDTDMLVIVLPMFILFFMVRMILKKDFFSLIALPLFIGIYLWWYPSSYTLNVALIGLFLIYTLIFHRKEKIFYIAVILSSLTLSNIAWFYQSAIIVILFALFALEQKRLNFMIIGILGSATLIFLILSGGVDPILYQLKFYIFRSDESANLTQGFMYFNVNQTIQEVENVDFSEFMRRISGSEIVFLFSLFGFVWLLRKHKSMIMALPILVLGFLALKGGLRFTIYSVPVMALGFGFLLSEFKAILVKKYSQLTSNVCIVFATILTLAPVFIHIYNYKAPTVFSQNEASLLNQLKNIANREDYVVTWWDYGYPVRYYSDVKTLVDGGKHLGKDNFFPSFSLSKDEQAAANMARLSVEYTEKSFYAPQNDILKSDILQAMMKDYNQSNVDLFLASLSKPDFKIDTPKTRDIYLYMPARMSLIFSTVASFSFINLDTGVLDKPFTFSTAYPLDVKNGEIYLSNGVVLSDDFRSFKIGDNVVSVNSIVEINSIKQGEYKITPIDDKAQFYIFYLKDSAIPYAQFILMDKTMFNSAYVQMFFLGNYDKNLFDLVINSRDAKVFKLKI.

The Cytoplasmic segment spans residues 1–11 (MLKKEYLKNPY). A helical membrane pass occupies residues 12–35 (LVLFAMIVLAYVFSVFCRFYWVWW). The Periplasmic segment spans residues 36–96 (ASEFNEYFFN…YWLYKITPFS (61 aa)). A DXD motif 1 motif is present at residues 52–54 (SND). D54 lines the Mn(2+) pocket. The helical transmembrane segment at 97–122 (FESIILYMSTFLSSLVVIPIILLANE) threads the bilayer. Over 123 to 125 (YKR) the chain is Cytoplasmic. A helical membrane pass occupies residues 126–144 (PLMGFVAALLASVANSYYN). Residues 145 to 152 (RTMSGYYD) lie on the Periplasmic side of the membrane. A Mn(2+)-binding site is contributed by D152. The DXD motif 2 signature appears at 152–154 (DTD). Residues 153–174 (TDMLVIVLPMFILFFMVRMILK) form a helical membrane-spanning segment. Topologically, residues 175-176 (KD) are cytoplasmic. Residues 177–192 (FFSLIALPLFIGIYLW) form a helical membrane-spanning segment. The Periplasmic segment spans residues 193-197 (WYPSS). Residue 194-196 (YPS) participates in [alpha-D-GalNAc-(1-&gt;4)]2-[beta-D-Glc-(1-&gt;3)]-[alpha-D-GalNAc-(1-&gt;4)]2-alpha-D-GalNAc-(1-&gt;3)-alpha-D-diNAcBac-tri-trans,hepta-cis-undecaprenyl diphosphate binding. Residues 198-215 (YTLNVALIGLFLIYTLIF) form a helical membrane-spanning segment. Residues 216-220 (HRKEK) are Cytoplasmic-facing. The helical transmembrane segment at 221–233 (IFYIAVILSSLTL) threads the bilayer. Residues 234 to 237 (SNIA) lie on the Periplasmic side of the membrane. A helical transmembrane segment spans residues 238–254 (WFYQSAIIVILFALFAL). Residues 255-260 (EQKRLN) lie on the Cytoplasmic side of the membrane. A helical transmembrane segment spans residues 261–278 (FMIIGILGSATLIFLILS). Topologically, residues 279–324 (GGVDPILYQLKFYIFRSDESANLTQGFMYFNVNQTIQEVENVDFSE) are periplasmic. Residue Y291 participates in [alpha-D-GalNAc-(1-&gt;4)]2-[beta-D-Glc-(1-&gt;3)]-[alpha-D-GalNAc-(1-&gt;4)]2-alpha-D-GalNAc-(1-&gt;3)-alpha-D-diNAcBac-tri-trans,hepta-cis-undecaprenyl diphosphate binding. The TIXE motif signature appears at 313-316 (TIQE). Position 316 (E316) interacts with Mn(2+). The helical transmembrane segment at 325-347 (FMRRISGSEIVFLFSLFGFVWLL) threads the bilayer. Residues 348 to 352 (RKHKS) lie on the Cytoplasmic side of the membrane. Residues 353–369 (MIMALPILVLGFLALKG) traverse the membrane as a helical segment. Over 370–373 (GLRF) the chain is Periplasmic. R372 lines the [alpha-D-GalNAc-(1-&gt;4)]2-[beta-D-Glc-(1-&gt;3)]-[alpha-D-GalNAc-(1-&gt;4)]2-alpha-D-GalNAc-(1-&gt;3)-alpha-D-diNAcBac-tri-trans,hepta-cis-undecaprenyl diphosphate pocket. A helical transmembrane segment spans residues 374 to 396 (TIYSVPVMALGFGFLLSEFKAIL). At 397 to 406 (VKKYSQLTSN) the chain is on the cytoplasmic side. Residues 407 to 427 (VCIVFATILTLAPVFIHIYNY) traverse the membrane as a helical segment. Residues 428-713 (KAPTVFSQNE…RDAKVFKLKI (286 aa)) are Periplasmic-facing. Residues 457–459 (WWD) form an interacts with target acceptor peptide in protein substrate region. The WWDYG motif signature appears at 457–461 (WWDYG). Y462 contributes to the [alpha-D-GalNAc-(1-&gt;4)]2-[beta-D-Glc-(1-&gt;3)]-[alpha-D-GalNAc-(1-&gt;4)]2-alpha-D-GalNAc-(1-&gt;3)-alpha-D-diNAcBac-tri-trans,hepta-cis-undecaprenyl diphosphate binding site. An N-linked (DATDGlc) asparagine glycan is attached at N534. An MI motif motif is present at residues 568 to 575 (MSLIFSTV).

Belongs to the STT3 family. It depends on Mg(2+) as a cofactor. Mn(2+) serves as cofactor.

The protein localises to the cell inner membrane. The catalysed reaction is tritrans,heptacis-undecaprenyl diphosphooligosaccharide + [protein]-L-asparagine = tritrans,heptacis-undecaprenyl diphosphate + a glycoprotein with the oligosaccharide chain attached by N-beta-D-glycosyl linkage to protein L-asparagine.. Its pathway is protein modification; protein glycosylation. Oligosaccharyl transferase (OST) that catalyzes the initial transfer of a defined glycan (GalNAc(2)GlcGalNAc(3)Bac(NAc)(2) in eubacteria, where Bac(NAc)(2) is di-N-acetyl bacillosamine) from the lipid carrier undecaprenol-pyrophosphate to an asparagine residue within an Asp/Glu-Asn-X-Ser/Thr consensus motif in nascent polypeptide chains, the first step in protein N-glycosylation. This chain is Undecaprenyl-diphosphooligosaccharide--protein glycotransferase (pglB), found in Campylobacter jejuni subsp. jejuni serotype O:2 (strain ATCC 700819 / NCTC 11168).